A 129-amino-acid polypeptide reads, in one-letter code: Follitropin subunit beta (129 aa).

A signal peptide spans 1–18 (MKSVQFCFLFCCWKAICC). 6 disulfides stabilise this stretch: C21–C69, C35–C84, C38–C122, C46–C100, C50–C102, and C105–C112. N25 and N42 each carry an N-linked (GlcNAc...) asparagine glycan.

Belongs to the glycoprotein hormones subunit beta family. As to quaternary structure, heterodimer. The active follitropin is a heterodimer composed of an alpha chain/CGA shared with other hormones and a unique beta chain/FSHB shown here.

Its subcellular location is the secreted. Its function is as follows. Together with the alpha chain CGA constitutes follitropin, the follicle-stimulating hormone, and provides its biological specificity to the hormone heterodimer. Binds FSHR, a G protein-coupled receptor, on target cells to activate downstream signaling pathways. Follitropin is involved in follicle development and spermatogenesis in reproductive organs. This Oryctolagus cuniculus (Rabbit) protein is Follitropin subunit beta (FSHB).